Consider the following 121-residue polypeptide: Large ribosomal subunit protein uL14 (121 aa).

Belongs to the universal ribosomal protein uL14 family. Part of the 50S ribosomal subunit. Forms a cluster with proteins L3 and L19. In the 70S ribosome, L14 and L19 interact and together make contacts with the 16S rRNA in bridges B5 and B8.

Its function is as follows. Binds to 23S rRNA. Forms part of two intersubunit bridges in the 70S ribosome. The sequence is that of Large ribosomal subunit protein uL14 from Parabacteroides distasonis (strain ATCC 8503 / DSM 20701 / CIP 104284 / JCM 5825 / NCTC 11152).